We begin with the raw amino-acid sequence, 259 residues long: Pimeloyl-[acyl-carrier protein] methyl ester esterase (259 aa).

In terms of domain architecture, AB hydrolase-1 spans 16 to 241 (FVMLHGWGMN…QSAHVPFISH (226 aa)). Substrate is bound by residues Trp22, 82 to 83 (SM), and 143 to 147 (FLLLQ). The active-site Nucleophile is the Ser82. Catalysis depends on residues Asp207 and His235. A substrate-binding site is contributed by His235.

The protein belongs to the AB hydrolase superfamily. Carboxylesterase BioH family. As to quaternary structure, monomer.

The protein resides in the cytoplasm. It catalyses the reaction 6-carboxyhexanoyl-[ACP] methyl ester + H2O = 6-carboxyhexanoyl-[ACP] + methanol + H(+). It participates in cofactor biosynthesis; biotin biosynthesis. In terms of biological role, the physiological role of BioH is to remove the methyl group introduced by BioC when the pimeloyl moiety is complete. It allows to synthesize pimeloyl-ACP via the fatty acid synthetic pathway through the hydrolysis of the ester bonds of pimeloyl-ACP esters. This is Pimeloyl-[acyl-carrier protein] methyl ester esterase from Hamiltonella defensa subsp. Acyrthosiphon pisum (strain 5AT).